A 459-amino-acid polypeptide reads, in one-letter code: uncharacterized protein (459 aa).

The B12-binding domain maps to 13 to 145; that stretch reads TESAIKRVVG…DALSKGRELK (133 aa). The Radical SAM core domain occupies 188–402; the sequence is ADGVPFGVVM…MNWRKYTTID (215 aa). Cysteine 202, cysteine 206, and cysteine 209 together coordinate [4Fe-4S] cluster.

It belongs to the methyltransferase superfamily. [4Fe-4S] cluster serves as cofactor.

This is an uncharacterized protein from Pyrococcus horikoshii (strain ATCC 700860 / DSM 12428 / JCM 9974 / NBRC 100139 / OT-3).